Consider the following 118-residue polypeptide: Small ribosomal subunit protein uS13 (118 aa).

The segment at 93 to 118 (RNLPVRGQNTKNNARTRKGPTRPLKR) is disordered. Residues 106-118 (ARTRKGPTRPLKR) are compositionally biased toward basic residues.

The protein belongs to the universal ribosomal protein uS13 family. In terms of assembly, part of the 30S ribosomal subunit. Forms a loose heterodimer with protein S19. Forms two bridges to the 50S subunit in the 70S ribosome.

Located at the top of the head of the 30S subunit, it contacts several helices of the 16S rRNA. In the 70S ribosome it contacts the 23S rRNA (bridge B1a) and protein L5 of the 50S subunit (bridge B1b), connecting the 2 subunits; these bridges are implicated in subunit movement. Contacts the tRNAs in the A and P-sites. The sequence is that of Small ribosomal subunit protein uS13 from Psychrobacter cryohalolentis (strain ATCC BAA-1226 / DSM 17306 / VKM B-2378 / K5).